A 240-amino-acid chain; its full sequence is Uridylate kinase (240 aa).

12–15 (KLSG) is an ATP binding site. An involved in allosteric activation by GTP region spans residues 20–25 (GDKGFG). Residue Gly54 participates in UMP binding. Residues Gly55 and Arg59 each coordinate ATP. UMP contacts are provided by residues Asp74 and 135-142 (TGSPYFST). Positions 163, 169, and 172 each coordinate ATP.

This sequence belongs to the UMP kinase family. As to quaternary structure, homohexamer.

The protein localises to the cytoplasm. The enzyme catalyses UMP + ATP = UDP + ADP. It functions in the pathway pyrimidine metabolism; CTP biosynthesis via de novo pathway; UDP from UMP (UMPK route): step 1/1. Allosterically activated by GTP. Inhibited by UTP. Functionally, catalyzes the reversible phosphorylation of UMP to UDP. This Levilactobacillus brevis (strain ATCC 367 / BCRC 12310 / CIP 105137 / JCM 1170 / LMG 11437 / NCIMB 947 / NCTC 947) (Lactobacillus brevis) protein is Uridylate kinase.